The sequence spans 387 residues: Mitochondrial import inner membrane translocase subunit TIM50 (387 aa).

A mitochondrion-targeting transit peptide spans 1-26 (MSAVSVYPMCVRASRGLLRLRQGARC). Residues 27-100 (STAPPLLDVV…QKENTAYAKK (74 aa)) are Mitochondrial matrix-facing. Positions 61–93 (LQQQQKSQEQPPPEGEDSGHKQDEQGEDKKQKE) are disordered. A compositionally biased stretch (basic and acidic residues) spans 77 to 93 (DSGHKQDEQGEDKKQKE). Residues 101–121 (MVLRLAGIMGLGGTVGIVYIF) form a helical membrane-spanning segment. The Mitochondrial intermembrane portion of the chain corresponds to 122–387 (GSNSVDEQGN…AGRFWSRKQQ (266 aa)). One can recognise an FCP1 homology domain in the interval 178–321 (YYQPPYTLVL…YDLAAFLKTI (144 aa)).

It belongs to the TIM50 family. Component of the TIM23 complex at least composed of timm23, timm17 and timm50.

The protein resides in the mitochondrion inner membrane. Functionally, essential component of the TIM23 complex, a complex that mediates the translocation of transit peptide-containing proteins across the mitochondrial inner membrane. This is Mitochondrial import inner membrane translocase subunit TIM50 (timm50) from Danio rerio (Zebrafish).